A 106-amino-acid polypeptide reads, in one-letter code: Pyruvate decarboxylase 2 (106 aa).

Mg(2+)-binding residues include N10 and G12.

The protein belongs to the TPP enzyme family. In terms of assembly, homotetramer. The cofactor is a metal cation. Thiamine diphosphate is required as a cofactor.

It carries out the reaction a 2-oxocarboxylate + H(+) = an aldehyde + CO2. The chain is Pyruvate decarboxylase 2 (PDC2) from Zea mays (Maize).